The primary structure comprises 260 residues: Protein phosphatase 1 regulatory subunit 35 (260 aa).

The tract at residues 1–100 (MMGFGASALE…PLLVAGAPGD (100 aa)) is disordered. Phosphoserine occurs at positions 46 and 53. Residues 64 to 76 (RKGRRGGSRRGRQ) show a composition bias toward basic residues.

It belongs to the PPP1R35 family. In terms of assembly, interacts with PPP1CA; this interaction mediates the PPP1CA phosphatase activity inhibition. Interacts with RTTN; this interaction allows the mutual recruitment to the centriole.

Its subcellular location is the cytoplasm. It is found in the cytoskeleton. The protein localises to the microtubule organizing center. The protein resides in the centrosome. It localises to the centriole. Its function is as follows. During centriole duplication, plays a role in the centriole elongation by promoting the recruitment of the microtubule-binding elongation machinery through its interaction with TTTN, leading to the centriole to centrosome conversion. In addition may play a role in the primary cilia assembly. The chain is Protein phosphatase 1 regulatory subunit 35 from Mus musculus (Mouse).